The primary structure comprises 123 residues: Small ribosomal subunit protein uS12 (123 aa).

A compositionally biased stretch (basic residues) spans 10–20; it reads KGRKKVKKKKT. The segment at 10–32 is disordered; the sequence is KGRKKVKKKKTAPALQGSPQKRG. 3-methylthioaspartic acid is present on aspartate 89.

This sequence belongs to the universal ribosomal protein uS12 family. In terms of assembly, part of the 30S ribosomal subunit. Contacts proteins S8 and S17. May interact with IF1 in the 30S initiation complex.

Functionally, with S4 and S5 plays an important role in translational accuracy. In terms of biological role, interacts with and stabilizes bases of the 16S rRNA that are involved in tRNA selection in the A site and with the mRNA backbone. Located at the interface of the 30S and 50S subunits, it traverses the body of the 30S subunit contacting proteins on the other side and probably holding the rRNA structure together. The combined cluster of proteins S8, S12 and S17 appears to hold together the shoulder and platform of the 30S subunit. In Halothermothrix orenii (strain H 168 / OCM 544 / DSM 9562), this protein is Small ribosomal subunit protein uS12.